Consider the following 241-residue polypeptide: uncharacterized protein (241 aa).

The next 6 helical transmembrane spans lie at 1–21 (MMMALQIFIKILPIMFFGILL), 43–63 (FPIIAVFFVSSTSGSFLLKNL), 75–95 (LPIYFLGMFVFGIHIILFYAI), 108–128 (IYVLIKFLVTCNYLIISVLML), 160–180 (VLTSFVPSVLIITYLIEHGLL), and 200–220 (ILVIVLTGLATISGAIGIASG).

It to M.jannaschii MJ0871, MJ0880 and MJ1556.

The protein localises to the cell membrane. This is an uncharacterized protein from Methanocaldococcus jannaschii (strain ATCC 43067 / DSM 2661 / JAL-1 / JCM 10045 / NBRC 100440) (Methanococcus jannaschii).